Reading from the N-terminus, the 309-residue chain is Olfactory receptor 8B4 (309 aa).

The Extracellular segment spans residues 1-25 (MTLRNSSSVTEFILVGLSEQPELQL). Residue Asn-5 is glycosylated (N-linked (GlcNAc...) asparagine). Residues 26–46 (PLFLLFLGIYVFTVVGNLGLI) traverse the membrane as a helical segment. Residues 47–54 (TLIGINPS) are Cytoplasmic-facing. Residues 55–75 (LHTPMYFFLFNLSFIDLCYSC) form a helical membrane-spanning segment. Over 76-98 (VFTPKMLNDFVSESIISYVGCMT) the chain is Extracellular. Cys-96 and Cys-188 form a disulfide bridge. The chain crosses the membrane as a helical span at residues 99–119 (QLFFFCFFVNSECYVLVSMAY). Residues 120-138 (DRYVAICNPLLYMVTMSPR) lie on the Cytoplasmic side of the membrane. A helical transmembrane segment spans residues 139-159 (VCFLLMFGSYVVGFAGAMAHT). At 160 to 196 (GSMLRLTFCDSNVIDHYLCDVLPLLQLSCTSTHVSEL) the chain is on the extracellular side. Residues 197–216 (VFFIVVGVITMLSSISIVIS) traverse the membrane as a helical segment. At 217 to 236 (YALILSNILCIPSAEGRSKA) the chain is on the cytoplasmic side. Residues 237–257 (FSTWGSHIIAVALFFGSGTFT) traverse the membrane as a helical segment. Residues 258-270 (YLTTSFPGSMNHG) lie on the Extracellular side of the membrane. Residues 271–291 (RFASVFYTNVVPMLNPSIYSL) form a helical membrane-spanning segment. Residues 292 to 309 (RNKDDKLALGKTLKRVLF) are Cytoplasmic-facing.

This sequence belongs to the G-protein coupled receptor 1 family.

It localises to the cell membrane. Its function is as follows. Odorant receptor. This is Olfactory receptor 8B4 (OR8B4) from Homo sapiens (Human).